Reading from the N-terminus, the 227-residue chain is 2-C-methyl-D-erythritol 4-phosphate cytidylyltransferase (227 aa).

This sequence belongs to the IspD/TarI cytidylyltransferase family. IspD subfamily.

The catalysed reaction is 2-C-methyl-D-erythritol 4-phosphate + CTP + H(+) = 4-CDP-2-C-methyl-D-erythritol + diphosphate. It participates in isoprenoid biosynthesis; isopentenyl diphosphate biosynthesis via DXP pathway; isopentenyl diphosphate from 1-deoxy-D-xylulose 5-phosphate: step 2/6. Its function is as follows. Catalyzes the formation of 4-diphosphocytidyl-2-C-methyl-D-erythritol from CTP and 2-C-methyl-D-erythritol 4-phosphate (MEP). The chain is 2-C-methyl-D-erythritol 4-phosphate cytidylyltransferase from Thermosipho melanesiensis (strain DSM 12029 / CIP 104789 / BI429).